The following is a 563-amino-acid chain: Pre-hexon-linking protein IIIa (563 aa).

Residues 1 to 117 form a peripentonal hexon-tethering domain region; sequence MRKRRTLTAP…ALLHRVSKYN (117 aa). The tract at residues 148 to 261 is binding to hexon-linking protein; it reads GSLTALNSFL…FTDSVSISRD (114 aa). Ser235 is modified (phosphoserine; by host). Phosphothreonine; by host is present on Thr284. The tract at residues 449 to 472 is disordered; that stretch reads RTESRSVSRVPTPASSRRSSVAMA. Phosphoserine; by host is present on residues Ser452 and Ser456. Low complexity predominate over residues 462 to 472; the sequence is ASSRRSSVAMA. Residues Ser475 and Ser486 each carry the phosphoserine; by host modification. A disordered region spans residues 522–543; sequence KYSSAISSDESDDGMSKPDKFL. The propeptide occupies 549–563; the sequence is GNPFAHLRPKLGRCL.

It belongs to the adenoviridae hexon-linking protein IIIa family. As to quaternary structure, interacts with hexon proteins; this interaction tethers the peripentonal hexons to hexons situated in the facet. Interacts with the penton protein (via N-terminus). Interacts with packaging protein 3; this interaction is required to promote correct genome packaging. Post-translationally, cleaved near the C-terminus by the viral protease during virion maturation to form the mature protein.

It localises to the virion. It is found in the host nucleus. In terms of biological role, structural component of the virion that acts as a cement protein on the capsid exterior which mediates the interactions between the hexons, including the peripentonal hexons, and reaches all the way to the penton vertices. Two hexon linking proteins IIIa, one from each facet, stabilize the unique edge interface between a pair of facets. As the virus enters the host cell, hexon linking proteins IIIa are shed concomitant with virion acidification in the endosome. During virus assembly, seems to play a role in the serotype specificity of the packaging of viral DNA via its interaction with packaging protein 3. The sequence is that of Pre-hexon-linking protein IIIa from Canis lupus familiaris (Dog).